The following is a 332-amino-acid chain: L-lactate dehydrogenase A chain (332 aa).

Residues 29–57 and Arg-99 each bind NAD(+); that span reads GMVG…MEEK. Residues Arg-106, Asn-138, and Arg-169 each contribute to the substrate site. Asn-138 serves as a coordination point for NAD(+). The Proton acceptor role is filled by His-193. Residue Thr-248 participates in substrate binding.

This sequence belongs to the LDH/MDH superfamily. LDH family. Homotetramer.

The protein resides in the cytoplasm. It catalyses the reaction (S)-lactate + NAD(+) = pyruvate + NADH + H(+). It functions in the pathway fermentation; pyruvate fermentation to lactate; (S)-lactate from pyruvate: step 1/1. In terms of biological role, interconverts simultaneously and stereospecifically pyruvate and lactate with concomitant interconversion of NADH and NAD(+). The sequence is that of L-lactate dehydrogenase A chain (ldha) from Lycodichthys dearborni (Antarctic eelpout).